The following is a 337-amino-acid chain: MSFFGFGPAAELDIALTDGESRRRAEHKTEDGKKEKYFLFYDGETVSGRVTVNLRNPGKRLEHQGLKIEFIGQIELYYDRGNHHEFVSLVKDLARPGEISQSQSFDFEFTHVEKPYESYTGQNVKLRYFLRATLSRRLNDVVKEMDIVVHTLSTYPELNSSIKMEVGIEDCLHIEFEYNKSKYHLKDVIVGKIYFLLVRIKIKHMEIDIIKRETTGTGPNVYHENDTIAKYEIMDGAPVRGESIPIRLFLAGYELTPTMRDINKKFSVRYYLNLVLIDEEERRYFKQQEIVLWRKGDIVRKSMSHQAAIASQRFEGTSHPETRPQHSGAAAVEQEHE.

Positions 313 to 337 are disordered; sequence RFEGTSHPETRPQHSGAAAVEQEHE.

Belongs to the VPS26 family. Component of the heterotrimeric retromer cargo-selective complex (CSC) which is believed to associate with variable sorting nexins to form functionally distinct retromer complex variants.

The protein localises to the cytoplasm. It localises to the endosome membrane. Its subcellular location is the early endosome. In terms of biological role, acts as a component of the retromer cargo-selective complex (CSC). The CSC is believed to be the core functional component of retromer or respective retromer complex variants acting to prevent missorting of selected transmembrane cargo proteins into the lysosomal degradation pathway. Retromer mediates retrograde transport of cargo proteins from endosomes to the trans-Golgi network (TGN). The sequence is that of Vacuolar protein sorting-associated protein 26B-A (vps26b-a) from Xenopus laevis (African clawed frog).